The following is a 534-amino-acid chain: MERLADRVILVWGFKRSLLAIGAGAFAVLALPPFGFFAAMFLSFTLLVWLIDGAAASPESGLIGRLWPAFAVGWLFGFGYFVAGLWWLGHALLVDSEEFAWALPLAILGLPACLAIFYGLAVALARIFWSDGMGRIAALAAGFGLMEWLRSVILTGFPWNAIGYGLMPVPLMMQSAHVIGAMGVTALAVFVFSAPALFGTRQGARTGVALAVLLFAAHLGYGAYALYLAPRPAPLPEDKRPVVRLVQPDIDQAAKMDNDADRNAIFETHLKLSAEAPRNGGRKPNIIVWPETSIPFILTDNQDALTRIADTLDDDQILIAGAVRAEEMGPGTPVRYYNSIYVIDGRGQIIAASDKVHLVPFGEYLPLEELLTELGIQNVVEVPGGFSAAASRHLLALPGGLNLYPLICYEIIFPDEMTGDIKDANALLNLTNDAWFGMTPGPYQHFLQARVRAVETGLPLIRDANSGISALVNAHGEIIAGLDLGETGFIDATVDSLSEGFGSTYPRQTYFWLTEALLILIALISREGFIFGLN.

The next 7 membrane-spanning stretches (helical) occupy residues 8–28 (VILV…AFAV), 31–51 (LPPF…VWLI), 69–89 (AFAV…WWLG), 105–125 (LAIL…VALA), 127–147 (IFWS…GLME), 178–198 (VIGA…PALF), and 208–228 (VALA…ALYL). A CN hydrolase domain is found at 246–496 (VQPDIDQAAK…TGFIDATVDS (251 aa)). Catalysis depends on glutamate 291, which acts as the Proton acceptor. Lysine 355 is a catalytic residue. Residue cysteine 408 is the Nucleophile of the active site. A helical membrane pass occupies residues 511-531 (FWLTEALLILIALISREGFIF).

Belongs to the CN hydrolase family. Apolipoprotein N-acyltransferase subfamily.

It is found in the cell inner membrane. It carries out the reaction N-terminal S-1,2-diacyl-sn-glyceryl-L-cysteinyl-[lipoprotein] + a glycerophospholipid = N-acyl-S-1,2-diacyl-sn-glyceryl-L-cysteinyl-[lipoprotein] + a 2-acyl-sn-glycero-3-phospholipid + H(+). It functions in the pathway protein modification; lipoprotein biosynthesis (N-acyl transfer). Functionally, catalyzes the phospholipid dependent N-acylation of the N-terminal cysteine of apolipoprotein, the last step in lipoprotein maturation. In Rhizobium etli (strain CIAT 652), this protein is Apolipoprotein N-acyltransferase.